The following is a 320-amino-acid chain: Pyrroline-5-carboxylate reductase 2 (320 aa).

Ser2 carries the N-acetylserine modification. Residues 6–11 (IGAGQL) and Ser34 contribute to the NADP(+) site. Positions 8, 10, 11, 34, 36, 56, 70, 71, and 97 each coordinate NADPH. NADP(+) is bound by residues Asn56, 69–72 (AVKP), and 95–97 (CAA). Glu164 is a binding site for L-proline. Asn230 contributes to the NADPH binding site. Ala237 and Thr238 together coordinate L-proline. The span at 295–305 (PTVSTLTPSSP) shows a compositional bias: low complexity. The interval 295–320 (PTVSTLTPSSPGKLLTRSLALGGKKD) is disordered. Residue Ser304 is modified to Phosphoserine.

The protein belongs to the pyrroline-5-carboxylate reductase family. As to quaternary structure, homodecamer; composed of 5 homodimers. Interacts with LTO1.

The protein resides in the cytoplasm. It is found in the mitochondrion. It carries out the reaction L-proline + NADP(+) = (S)-1-pyrroline-5-carboxylate + NADPH + 2 H(+). The catalysed reaction is L-proline + NAD(+) = (S)-1-pyrroline-5-carboxylate + NADH + 2 H(+). The protein operates within amino-acid biosynthesis; L-proline biosynthesis; L-proline from L-glutamate 5-semialdehyde: step 1/1. Its function is as follows. Oxidoreductase that catalyzes the last step in proline biosynthesis, which corresponds to the reduction of pyrroline-5-carboxylate to L-proline using NAD(P)H. At physiologic concentrations, has higher specific activity in the presence of NADH. Involved in cellular response to oxidative stress. In some cell types, such as erythrocytes, its primary function may be the generation of NADP(+). This Macaca fascicularis (Crab-eating macaque) protein is Pyrroline-5-carboxylate reductase 2 (PYCR2).